Reading from the N-terminus, the 213-residue chain is MIHYPATAQSQFEAQGLGYIPMVIEQSGRGERSYDIYSRLLKERIIFLVGPVNDATANLVVAQLLFLEAENPDKDIYFYINSPGGSVTAGMGIYDTMQFVKPDVSTLCVGQAASMGALLLAAGAQGKRFCLPNSRVMIHQPLGGFQGQASDIEIHAKEILFLREKLNHILASHTGQPVEKIALDTDRDNFMSAEQSVAYGIVDKVIASRADAA.

The active-site Nucleophile is Ser-114. His-139 is an active-site residue.

The protein belongs to the peptidase S14 family. Fourteen ClpP subunits assemble into 2 heptameric rings which stack back to back to give a disk-like structure with a central cavity, resembling the structure of eukaryotic proteasomes.

The protein localises to the cytoplasm. The enzyme catalyses Hydrolysis of proteins to small peptides in the presence of ATP and magnesium. alpha-casein is the usual test substrate. In the absence of ATP, only oligopeptides shorter than five residues are hydrolyzed (such as succinyl-Leu-Tyr-|-NHMec, and Leu-Tyr-Leu-|-Tyr-Trp, in which cleavage of the -Tyr-|-Leu- and -Tyr-|-Trp bonds also occurs).. Functionally, cleaves peptides in various proteins in a process that requires ATP hydrolysis. Has a chymotrypsin-like activity. Plays a major role in the degradation of misfolded proteins. This is ATP-dependent Clp protease proteolytic subunit from Methylobacillus flagellatus (strain ATCC 51484 / DSM 6875 / VKM B-1610 / KT).